Consider the following 580-residue polypeptide: Jasmonoyl--L-amino acid synthetase JAR6 (580 aa).

ATP is bound at residue S100. Residue S103 participates in jasmonate binding. Residues M120, T123, G164, N169, and 332 to 337 (GSSEGW) each bind ATP. Residue 167 to 171 (TTNVY) coordinates an L-alpha-amino acid. Residue 329-332 (ADYG) participates in jasmonate binding. 534–538 (KILDH) serves as a coordination point for an L-alpha-amino acid.

The protein belongs to the IAA-amido conjugating enzyme family.

It carries out the reaction a jasmonate + an L-alpha-amino acid + ATP = a jasmonyl-L-amino acid + AMP + diphosphate + H(+). In terms of biological role, catalyzes the synthesis of jasmonate-amino acid conjugates by adenylation. Catalyzes the conjugation of jasmonate (JA) to Ile, Leu and Val. Catalyzes the conjugation of JA to Ile that may mediate defense signaling and resistance to the herbivore Manduca sexta caterpillars. The polypeptide is Jasmonoyl--L-amino acid synthetase JAR6 (JAR6) (Nicotiana attenuata (Coyote tobacco)).